Consider the following 385-residue polypeptide: Queuine tRNA-ribosyltransferase (385 aa).

The active-site Proton acceptor is aspartate 92. Substrate is bound by residues 92 to 96 (DSGGF), aspartate 146, glutamine 188, and glycine 215. Residues 246–252 (GVGHPED) form an RNA binding region. Residue aspartate 265 is the Nucleophile of the active site. Positions 270 to 274 (TRTGR) are RNA binding; important for wobble base 34 recognition. Zn(2+)-binding residues include cysteine 303, cysteine 305, cysteine 308, and histidine 334.

This sequence belongs to the queuine tRNA-ribosyltransferase family. Homodimer. Within each dimer, one monomer is responsible for RNA recognition and catalysis, while the other monomer binds to the replacement base PreQ1. Requires Zn(2+) as cofactor.

The catalysed reaction is 7-aminomethyl-7-carbaguanine + guanosine(34) in tRNA = 7-aminomethyl-7-carbaguanosine(34) in tRNA + guanine. It functions in the pathway tRNA modification; tRNA-queuosine biosynthesis. Its function is as follows. Catalyzes the base-exchange of a guanine (G) residue with the queuine precursor 7-aminomethyl-7-deazaguanine (PreQ1) at position 34 (anticodon wobble position) in tRNAs with GU(N) anticodons (tRNA-Asp, -Asn, -His and -Tyr). Catalysis occurs through a double-displacement mechanism. The nucleophile active site attacks the C1' of nucleotide 34 to detach the guanine base from the RNA, forming a covalent enzyme-RNA intermediate. The proton acceptor active site deprotonates the incoming PreQ1, allowing a nucleophilic attack on the C1' of the ribose to form the product. After dissociation, two additional enzymatic reactions on the tRNA convert PreQ1 to queuine (Q), resulting in the hypermodified nucleoside queuosine (7-(((4,5-cis-dihydroxy-2-cyclopenten-1-yl)amino)methyl)-7-deazaguanosine). The polypeptide is Queuine tRNA-ribosyltransferase (Thermus thermophilus (strain ATCC 27634 / DSM 579 / HB8)).